The chain runs to 389 residues: S-adenosylmethionine synthase (389 aa).

His15 contributes to the ATP binding site. Residue Asp17 participates in Mg(2+) binding. Glu43 is a binding site for K(+). Residues Glu56 and Gln99 each coordinate L-methionine. Residues 99–109 form a flexible loop region; it reads QSPDIAQGVNE. ATP is bound by residues 166–168, 234–235, Asp243, 249–250, Ala266, and Lys270; these read DAK, RF, and RK. An L-methionine-binding site is contributed by Asp243. Lys274 is an L-methionine binding site.

It belongs to the AdoMet synthase family. In terms of assembly, homotetramer; dimer of dimers. It depends on Mg(2+) as a cofactor. K(+) is required as a cofactor.

It localises to the cytoplasm. It carries out the reaction L-methionine + ATP + H2O = S-adenosyl-L-methionine + phosphate + diphosphate. The protein operates within amino-acid biosynthesis; S-adenosyl-L-methionine biosynthesis; S-adenosyl-L-methionine from L-methionine: step 1/1. Catalyzes the formation of S-adenosylmethionine (AdoMet) from methionine and ATP. The overall synthetic reaction is composed of two sequential steps, AdoMet formation and the subsequent tripolyphosphate hydrolysis which occurs prior to release of AdoMet from the enzyme. This is S-adenosylmethionine synthase from Neisseria gonorrhoeae (strain ATCC 700825 / FA 1090).